The primary structure comprises 522 residues: Gypsy retrotransposon integrase-like protein 1 (522 aa).

An Integrase catalytic domain is found at 135–292; it reads KVENPWSLVT…TPYFQMFSRN (158 aa). Ser-502 is modified (phosphoserine).

This Pongo abelii (Sumatran orangutan) protein is Gypsy retrotransposon integrase-like protein 1 (GIN1).